The sequence spans 312 residues: Malate dehydrogenase (312 aa).

NAD(+)-binding positions include Gly-12 to Gly-17 and Asp-36. Substrate contacts are provided by Arg-87 and Arg-93. Residues Asn-100 and Leu-123–Asn-125 contribute to the NAD(+) site. Asn-125 serves as a coordination point for substrate. Ser-149 is subject to Phosphoserine. Position 156 (Arg-156) interacts with substrate. His-180 functions as the Proton acceptor in the catalytic mechanism.

This sequence belongs to the LDH/MDH superfamily. MDH type 3 family.

It catalyses the reaction (S)-malate + NAD(+) = oxaloacetate + NADH + H(+). In terms of biological role, catalyzes the reversible oxidation of malate to oxaloacetate. The polypeptide is Malate dehydrogenase (Bacillus mycoides (strain KBAB4) (Bacillus weihenstephanensis)).